Here is a 568-residue protein sequence, read N- to C-terminus: Potassium-transporting ATPase potassium-binding subunit (568 aa).

A run of 10 helical transmembrane segments spans residues 3 to 23 (TEVL…YPLG), 68 to 88 (LLVV…TQGV), 133 to 153 (FVIM…MAGI), 180 to 200 (LLPL…PMGF), 256 to 276 (VECW…GFYL), 281 to 301 (LGYS…CINV), 375 to 395 (FGGV…AVFI), 421 to 441 (IVAL…AYLF), 497 to 517 (IVLI…AGIL), and 535 to 555 (VTFG…SFFP).

This sequence belongs to the KdpA family. In terms of assembly, the system is composed of three essential subunits: KdpA, KdpB and KdpC.

The protein resides in the cell inner membrane. Part of the high-affinity ATP-driven potassium transport (or Kdp) system, which catalyzes the hydrolysis of ATP coupled with the electrogenic transport of potassium into the cytoplasm. This subunit binds the periplasmic potassium ions and delivers the ions to the membrane domain of KdpB through an intramembrane tunnel. The chain is Potassium-transporting ATPase potassium-binding subunit from Phocaeicola vulgatus (strain ATCC 8482 / DSM 1447 / JCM 5826 / CCUG 4940 / NBRC 14291 / NCTC 11154) (Bacteroides vulgatus).